Consider the following 572-residue polypeptide: Urease subunit alpha (572 aa).

The region spanning 130-572 is the Urease domain; it reads GGVDTHIHFI…LPMAQRYFLF (443 aa). Ni(2+) contacts are provided by His-135, His-137, and Lys-218. Residue Lys-218 is modified to N6-carboxylysine. Residue His-220 participates in substrate binding. Ni(2+) contacts are provided by His-247 and His-273. Residue His-321 is the Proton donor of the active site. Asp-361 contacts Ni(2+).

Belongs to the metallo-dependent hydrolases superfamily. Urease alpha subunit family. As to quaternary structure, heterotrimer of UreA (gamma), UreB (beta) and UreC (alpha) subunits. Three heterotrimers associate to form the active enzyme. Ni cation is required as a cofactor. Post-translationally, carboxylation allows a single lysine to coordinate two nickel ions.

It is found in the cytoplasm. The enzyme catalyses urea + 2 H2O + H(+) = hydrogencarbonate + 2 NH4(+). It functions in the pathway nitrogen metabolism; urea degradation; CO(2) and NH(3) from urea (urease route): step 1/1. The sequence is that of Urease subunit alpha from Ralstonia nicotianae (strain ATCC BAA-1114 / GMI1000) (Ralstonia solanacearum).